We begin with the raw amino-acid sequence, 126 residues long: Major sperm protein 1 (126 aa).

Residue Ala-2 is modified to N-acetylalanine. The MSP domain maps to 8–125 (DIATMPAQKV…RRKNLPIEYN (118 aa)).

Sperm.

The protein localises to the cell projection. It localises to the pseudopodium. It is found in the cytoplasm. The protein resides in the cytoskeleton. Central component in molecular interactions underlying sperm crawling. Forms an extensive filament system that extends from sperm villipoda, along the leading edge of the pseudopod. The polypeptide is Major sperm protein 1 (MSP-1) (Globodera rostochiensis (Golden nematode worm)).